Here is a 201-residue protein sequence, read N- to C-terminus: Recombination protein RecR (201 aa).

The C4-type zinc finger occupies C59–C74. In terms of domain architecture, Toprim spans R82–P177.

It belongs to the RecR family.

May play a role in DNA repair. It seems to be involved in an RecBC-independent recombinational process of DNA repair. It may act with RecF and RecO. In Hahella chejuensis (strain KCTC 2396), this protein is Recombination protein RecR.